The following is a 191-amino-acid chain: MTLLQVMAADDAARVRLRTTEEAAIAAELAAHGITFDRWPVLDDAAALSSDDLLAHYADRIAALNADGRYRHIDVARIHPDDADPQWPQTARAARTKFLDEHRHAEDEVRFFAAGRGCFYLHLGAEVLAVVCEGGDLMSVPAGTLHWFDMGERPDFIAVRFFEEADGWVGDFTGDRISAGFPTLDDLLTAP.

Residues His102, His104, Glu108, and His146 each contribute to the Fe(2+) site. His102, His104, Glu108, and His146 together coordinate Ni(2+).

This sequence belongs to the acireductone dioxygenase (ARD) family. As to quaternary structure, monomer. Requires Fe(2+) as cofactor. It depends on Ni(2+) as a cofactor.

It carries out the reaction 1,2-dihydroxy-5-(methylsulfanyl)pent-1-en-3-one + O2 = 3-(methylsulfanyl)propanoate + CO + formate + 2 H(+). The catalysed reaction is 1,2-dihydroxy-5-(methylsulfanyl)pent-1-en-3-one + O2 = 4-methylsulfanyl-2-oxobutanoate + formate + 2 H(+). The protein operates within amino-acid biosynthesis; L-methionine biosynthesis via salvage pathway; L-methionine from S-methyl-5-thio-alpha-D-ribose 1-phosphate: step 5/6. Catalyzes 2 different reactions between oxygen and the acireductone 1,2-dihydroxy-3-keto-5-methylthiopentene (DHK-MTPene) depending upon the metal bound in the active site. Fe-containing acireductone dioxygenase (Fe-ARD) produces formate and 2-keto-4-methylthiobutyrate (KMTB), the alpha-ketoacid precursor of methionine in the methionine recycle pathway. Ni-containing acireductone dioxygenase (Ni-ARD) produces methylthiopropionate, carbon monoxide and formate, and does not lie on the methionine recycle pathway. The sequence is that of Acireductone dioxygenase 2 from Nocardia farcinica (strain IFM 10152).